A 590-amino-acid chain; its full sequence is Pentatricopeptide repeat-containing protein At1g63070, mitochondrial (590 aa).

Residues 1–34 (MMRSVAVIGKKCLHRHTVLLKGNPRTTLCWERSF) constitute a mitochondrion transit peptide. 14 PPR repeats span residues 74-108 (SIVEFSKLLSAIAKMNKFDLVISLGEQMQNLGISH), 109-143 (NLYTYSIFINYFCRRSQLSLALAILGKMMKLGYGP), 144-178 (SIVTLNSLLNGFCHGNRISEAVALVDQMVEMGYQP), 179-213 (DTVTFTTLVHGLFQHNKASEAVALVERMVVKGCQP), 214-248 (DLVTYGAVINGLCKRGEPDLALNLLNKMEKGKIEA), 249-283 (DVVIYNTIIDGLCKYKHMDDAFDLFNKMETKGIKP), 284-318 (DVFTYNPLISCLCNYGRWSDASRLLSDMLEKNINP), 319-353 (DLVFFNALIDAFVKEGKLVEAEKLYDEMVKSKHCF), 355-389 (DVVAYNTLIKGFCKYKRVEEGMEVFREMSQRGLVG), 390-424 (NTVTYTTLIHGFFQARDCDNAQMVFKQMVSDGVHP), 425-459 (DIMTYNILLDGLCNNGNVETALVVFEYMQKRDMKL), 460-494 (DIVTYTTMIEALCKAGKVEDGWDLFCSLSLKGVKP), 495-529 (NVVTYTTMMSGFCRKGLKEEADALFVEMKEDGPLP), and 530-564 (NSGTYNTLIRARLRDGDEAASAELIKEMRSCGFAG).

The protein belongs to the PPR family. P subfamily.

It is found in the mitochondrion. This chain is Pentatricopeptide repeat-containing protein At1g63070, mitochondrial, found in Arabidopsis thaliana (Mouse-ear cress).